A 715-amino-acid chain; its full sequence is MAANMYRVGDYVYFENSSSNPYLIRRIEELNKTANGNVEAKVVCFYRRRDISSSLIALADKHATLSVCYRAGPGADTGEEGEVEEEVENPEMVDLPEKLKHQLRHRELFLSRQLESLPATHIRGKCSVTLLNETESLKSYLEREDFFFYSLVYDPQQKTLLADKGEIRVGNRYQADITDLLKEGEEDGRDQSKLETKVWEAHNPLVDKQIDQFLVVARSVGTFARALDCSSSVRQPSLHMSAAAASRDITLFHAMDTLHKNIYDISKAISALVPQGGPVLCRDEMEEWSASEANLFEEALEKYGKDFTDIQQDFLPWKSLTSIIEYYYMWKTTDRYVQQKRLKAAEAESKLKQVYIPNYNKPNPNQISASSVKATVVNGTGTPGQSPGAGRACESCYTTQSYQWYSWGPPNMQCRLCASCWTYWKKYGGLKMPTRLDGERPGPNRNNMSPHGIPARSSGSPKFAMKTRQAFYLHTTKLTRIARRLCREILRPWHAARHPYMPINSAAIKAECTARLPEASQSPLVLKQVVRKPLEAVLRYLETHPRPPKPDPVKSSSSVLSSLTPAKSAPVINNGSPTILGKRSYEQHNGVDGNMKKRLLMPSRGLANHGQTRHMGPSRNLLLNGKSYPTKVRLIRGGSLPPVKRRRMNWIDAPDDVFYMATEETRKIRKLLSSSETKRAARRPYKPIALRQSQALPLRPPPPAPVNDEPIVIED.

In terms of domain architecture, BAH spans 1–164 (MAANMYRVGD…PQQKTLLADK (164 aa)). Residues 165-276 (GEIRVGNRYQ…KAISALVPQG (112 aa)) enclose the ELM2 domain. Lys-182 participates in a covalent cross-link: Glycyl lysine isopeptide (Lys-Gly) (interchain with G-Cter in ubiquitin). In terms of domain architecture, SANT spans 283 to 335 (DEMEEWSASEANLFEEALEKYGKDFTDIQQDFLPWKSLTSIIEYYYMWKTTDR). Residue Ser-386 is modified to Phosphoserine. A GATA-type; atypical zinc finger spans residues 393–420 (CESCYTTQSYQWYSWGPPNMQCRLCASC). The tract at residues 437-460 (DGERPGPNRNNMSPHGIPARSSGS) is disordered. Ser-449 is subject to Phosphoserine. Lys-509 participates in a covalent cross-link: Glycyl lysine isopeptide (Lys-Gly) (interchain with G-Cter in SUMO2 and SUMO3). Ser-522 is modified (phosphoserine). Residues 542–552 (ETHPRPPKPDP) show a composition bias toward basic and acidic residues. A disordered region spans residues 542–590 (ETHPRPPKPDPVKSSSSVLSSLTPAKSAPVINNGSPTILGKRSYEQHNG). The short motif at 545 to 552 (PRPPKPDP) is the SH3-binding element. A Glycyl lysine isopeptide (Lys-Gly) (interchain with G-Cter in SUMO2) cross-link involves residue Lys-549. Low complexity predominate over residues 553–565 (VKSSSSVLSSLTP). Thr-564 carries the post-translational modification Phosphothreonine. Position 576 is a phosphoserine (Ser-576). The residue at position 578 (Thr-578) is a Phosphothreonine. Lys-626 carries the post-translational modification N6-acetyllysine; alternate. Lys-626 participates in a covalent cross-link: Glycyl lysine isopeptide (Lys-Gly) (interchain with G-Cter in ubiquitin); alternate. Residue Ser-639 is modified to Phosphoserine. The tract at residues 656–686 (DVFYMATEETRKIRKLLSSSETKRAARRPYK) is interaction with RBBP4. The tract at residues 673–715 (SSSETKRAARRPYKPIALRQSQALPLRPPPPAPVNDEPIVIED) is disordered. An SH3-binding motif is present at residues 696–705 (LPLRPPPPAP). The SUMO interaction motif 1 (SIM); crucial for efficient sumoylation motif lies at 711–715 (IVIED).

Belongs to the metastasis-associated protein family. As to quaternary structure, component of the nucleosome remodeling and deacetylase (NuRD) repressor complex, composed of core proteins MTA1, MTA2, MTA3, RBBP4, RBBP7, HDAC1, HDAC2, MBD2, MBD3, and peripherally associated proteins CDK2AP1, CDK2AP2, GATAD2A, GATAD2B, CHD3, CHD4 and CHD5. The exact stoichiometry of the NuRD complex is unknown, and some subunits such as MBD2 and MBD3, GATAD2A and GATAD2B, and CHD3, CHD4 and CHD5 define mutually exclusive NuRD complexes. Interacts with RBBP4; the interaction is direct. Interacts with BMAL1. Interacts with CLOCK. Interacts with COP1. Interacts with CSNK1G2 in the cytoplasm. Interacts with EP300. Interacts with HDAC2. Interacts with ITGB3BP/CENPR. Interacts with MBD3L2. Interacts with MDM2. Interacts with NACC2. Interacts with p53/TP53. Interacts with PIAS1. Interacts with PIAS3. Interacts with PIAS4. Interacts with PWWP2A. Interacts with PWWP2B. Interacts with SENP1. Interacts with SENP2. Interacts with SIX3; facilitates the binding of SIX3 to the core DNA motif of SIX3 promoter. Interacts with SUMO1. Interacts with SUMO2. Interacts with TFCP2L1; which is indispensable for TFCP2L1-mediated self-renewal-promoting effect and endoderm-inhibiting action. Interacts with TFAP2C. Interacts with TPR. Interacts with UBE2I/UBC9. Post-translationally, phosphorylation by CSNK1G2/CK1 triggered by estrogen enhances corepression of estrogen receptor (ER). In terms of processing, acetylation is essential for its transcriptional coactivator activity. Sumoylation positively regulates its transcriptional corepressor activity but does not affect the protein stability. Sumoylated preferentially by SUMO2 or SUMO3 than SUMO1. Sumoylation is enhanced by PIAS1/3/4 and preferentially sumoylated by SUMO2 in the presence of PIAS1/3/4. Desumoylated by SENP1. Post-translationally, ubiquitinated by COP1, which leads to proteasomal degradation. In terms of tissue distribution, widely expressed but not in skeletal muscle. Highly expressed in the brain, liver, kidney and cardiac muscle and in mammary tumors.

The protein resides in the nucleus. The protein localises to the nucleus envelope. Its subcellular location is the cytoplasm. It localises to the cytoskeleton. In terms of biological role, transcriptional coregulator which can act as both a transcriptional corepressor and coactivator. Acts as a component of the histone deacetylase NuRD complex which participates in the remodeling of chromatin. In the NuRD complex, regulates transcription of its targets by modifying the acetylation status of the target chromatin and cofactor accessibility to the target DNA. In conjunction with other components of NuRD, acts as a transcriptional corepressor of BRCA1, ESR1, TFF1 and CDKN1A. Acts as a transcriptional coactivator of BCAS3, PAX5 and SUMO2, independent of the NuRD complex. Stimulates the expression of WNT1 by inhibiting the expression of its transcriptional corepressor SIX3. Regulates p53-dependent and -independent DNA repair processes following genotoxic stress. Regulates the stability and function of p53/TP53 by inhibiting its ubiquitination by COP1 and MDM2 thereby regulating the p53-dependent DNA repair. Plays a role in the regulation of the circadian clock and is essential for the generation and maintenance of circadian rhythms under constant light and for normal entrainment of behavior to light-dark (LD) cycles. Positively regulates the CLOCK-BMAL1 heterodimer mediated transcriptional activation of its own transcription and the transcription of CRY1. Regulates deacetylation of BMAL1 by regulating SIRT1 expression, resulting in derepressing CRY1-mediated transcription repression. With Tfcp2l1, promotes establishment and maintenance of pluripotency in embryonic stem cells (ESCs) and inhibits endoderm differentiation. The chain is Metastasis-associated protein MTA1 (Mta1) from Mus musculus (Mouse).